The chain runs to 430 residues: Microtubule-associated protein tau (430 aa).

The span at 1-16 (MAEPRQEFDTAEDHAE) shows a compositional bias: basic and acidic residues. The tract at residues 1-245 (MAEPRQEFDT…PVPMPDLKNV (245 aa)) is disordered. Alanine 2 is modified (N-acetylalanine). At tyrosine 18 the chain carries Phosphotyrosine. Residue lysine 31 forms a Glycyl lysine isopeptide (Lys-Gly) (interchain with G-Cter in ubiquitin) linkage. Phosphoserine is present on residues serine 33 and serine 48. Over residues 48–58 (SETSDAKSTPT) the composition is skewed to polar residues. Residues threonine 56, threonine 58, and threonine 98 each carry the phosphothreonine modification. Basic and acidic residues predominate over residues 117 to 133 (KGKEGTGSEDRKAKGAD). Threonine 142 carries the post-translational modification Phosphothreonine. Arginine 144 is subject to Omega-N-methylarginine. N6,N6-dimethyllysine; alternate is present on lysine 152. Residue lysine 152 is modified to N6-acetyllysine; alternate. Phosphothreonine is present on residues threonine 158, threonine 164, threonine 165, and threonine 170. Residues 161–203 (PAKTTPSPKTPPGTGEPAKSGDRSGYSSPGSPGTPGSRSRTPS) show a composition bias toward low complexity. Phosphoserine is present on residues serine 180 and serine 184. Position 186 is a phosphotyrosine (tyrosine 186). Residues serine 187, serine 188, and serine 191 each carry the phosphoserine modification. Phosphothreonine is present on residues threonine 194 and threonine 201. Serine 203 is modified (phosphoserine). Threonine 206 carries the phosphothreonine modification. At lysine 214 the chain carries N6-acetyllysine. Position 220 is a phosphothreonine (threonine 220). A phosphoserine mark is found at serine 224 and serine 226. Tau/MAP repeat units follow at residues 233 to 263 (QTAPVPMPDLKNVRSKIGSTENLKHQPGGGK), 264 to 294 (VQIINKKLDLSNVQSKCGSKDNIKHVPGGGS), 295 to 325 (VQIVYKPVDLSKVTSKCGSLGNIHHKPGGGQ), and 326 to 357 (VEVKSEKLDFKDRVQSKIGSLDNITHVPGGGN). Residue lysine 243 forms a Glycyl lysine isopeptide (Lys-Gly) (interchain with G-Cter in ubiquitin) linkage. An N6-acetyllysine; alternate modification is found at lysine 248. An N6-methyllysine; alternate modification is found at lysine 248. Lysine 248 participates in a covalent cross-link: Glycyl lysine isopeptide (Lys-Gly) (interchain with G-Cter in ubiquitin); alternate. The residue at position 251 (serine 251) is a Phosphoserine. A Glycyl lysine isopeptide (Lys-Gly) (interchain with G-Cter in ubiquitin) cross-link involves residue lysine 256. Lysine 270 carries the post-translational modification N6-acetyllysine; alternate. Residue lysine 270 forms a Glycyl lysine isopeptide (Lys-Gly) (interchain with G-Cter in ubiquitin); alternate linkage. A phosphoserine mark is found at serine 274 and serine 278. The residue at position 279 (lysine 279) is an N6-acetyllysine. The cysteines at positions 280 and 311 are disulfide-linked. Serine 282 carries the phosphoserine modification. Lysine 287 is subject to N6-acetyllysine; alternate. Residue lysine 287 forms a Glycyl lysine isopeptide (Lys-Gly) (interchain with G-Cter in ubiquitin); alternate linkage. Serine 294 carries the phosphoserine modification. Lysine 300 carries the N6,N6-dimethyllysine; alternate modification. 3 positions are modified to N6-acetyllysine; alternate: lysine 300, lysine 306, and lysine 310. Glycyl lysine isopeptide (Lys-Gly) (interchain with G-Cter in ubiquitin); alternate cross-links involve residues lysine 300, lysine 306, and lysine 310. A Phosphoserine modification is found at serine 313. An N6-acetyllysine; alternate mark is found at lysine 320, lysine 332, and lysine 336. Glycyl lysine isopeptide (Lys-Gly) (interchain with G-Cter in ubiquitin); alternate cross-links involve residues lysine 320, lysine 332, and lysine 336. Arginine 338 carries the omega-N-methylarginine modification. Phosphoserine is present on serine 341. Residue lysine 342 forms a Glycyl lysine isopeptide (Lys-Gly) (interchain with G-Cter in ubiquitin) linkage. At serine 345 the chain carries Phosphoserine. An N6-acetyllysine; alternate modification is found at lysine 358. Lysine 358 participates in a covalent cross-link: Glycyl lysine isopeptide (Lys-Gly) (interchain with G-Cter in ubiquitin); alternate. A Glycyl lysine isopeptide (Lys-Gly) (interchain with G-Cter in ubiquitin) cross-link involves residue lysine 364. The residue at position 374 (lysine 374) is an N6-acetyllysine; alternate. Lysine 374 is covalently cross-linked (Glycyl lysine isopeptide (Lys-Gly) (interchain with G-Cter in ubiquitin); alternate). Residue tyrosine 383 is modified to Phosphotyrosine. Serine 385 and serine 389 each carry phosphoserine. The interval 387–406 (VVSGDTSPRHLSNVSSTGSI) is disordered. Residues 390–406 (GDTSPRHLSNVSSTGSI) show a composition bias toward polar residues. Threonine 392 bears the Phosphothreonine mark. Phosphoserine occurs at positions 393, 398, 405, and 411. Threonine 416 carries the phosphothreonine modification.

In terms of assembly, interacts with MARK1, MARK2, MARK3 and MARK4. Interacts with SQSTM1 when polyubiquitinated. Interacts with PSMC2 through SQSTM1. Interacts with FKBP4. Binds to CSNK1D. Interacts with SGK1. Interacts with PIN1. Interacts with LRRK2. Interacts with LRP1, leading to endocytosis; this interaction is reduced in the presence of LRPAP1/RAP. Polyubiquitinated. Requires functional TRAF6 and may provoke SQSTM1-dependent degradation by the proteasome. In terms of processing, phosphorylation at various serine and threonine residues in S-P or T-P motifs by proline-directed protein kinases (PDPK1, CDK1, CDK5, GSK3, MAPK) (a few sites per protein in interphase, more in mitosis), and at serine residues in K-X-G-S motifs by MAP/microtubule affinity-regulating kinase (MARK1, MARK2, MARK3 or MARK4), causing detachment from microtubules, and their disassembly. Phosphorylation at Ser-345 by BRSK1 and BRSK2 in neurons affects ability to bind microtubules and plays a role in neuron polarization. Phosphorylated by PHK. Dephosphorylation at several serine and threonine residues by the serine/threonine phosphatase PPP5C. Post-translationally, hyperphosphorylated (in particular at Thr-170, Ser-191, Thr-194, Ser-251, and Ser-345) during hibernation. Phosphorylation is fully reversible after arousal. Highly phosphorylated tau contains a number of paired helical filaments (PHFs)-like epitopes. PHF-like phosphorylation is not associated with fibril formation. Distribution of PHF-like tau is more intense in the entorhinal cortex, hippocampus and isocortical areas. PHF-like phosphorylation-dephosphorylation during hibernation cycle is synchronized with regression-re-establishment of afferentation. It may reflect a protective mechanism in an unfavorable environment.

It is found in the cytoplasm. Its subcellular location is the cytosol. It localises to the cell membrane. The protein localises to the cytoskeleton. The protein resides in the cell projection. It is found in the axon. Its subcellular location is the dendrite. Its function is as follows. Promotes microtubule assembly and stability, and might be involved in the establishment and maintenance of neuronal polarity. The C-terminus binds axonal microtubules while the N-terminus binds neural plasma membrane components, suggesting that tau functions as a linker protein between both. Axonal polarity is predetermined by tau localization (in the neuronal cell) in the domain of the cell body defined by the centrosome. The short isoforms allow plasticity of the cytoskeleton whereas the longer isoforms may preferentially play a role in its stabilization. The polypeptide is Microtubule-associated protein tau (MAPT) (Spermophilus citellus (European ground squirrel)).